Consider the following 367-residue polypeptide: Peptide chain release factor 2 (367 aa).

An N5-methylglutamine modification is found at Gln254.

It belongs to the prokaryotic/mitochondrial release factor family. Methylated by PrmC. Methylation increases the termination efficiency of RF2.

It is found in the cytoplasm. Functionally, peptide chain release factor 2 directs the termination of translation in response to the peptide chain termination codons UGA and UAA. The sequence is that of Peptide chain release factor 2 from Burkholderia cenocepacia (strain ATCC BAA-245 / DSM 16553 / LMG 16656 / NCTC 13227 / J2315 / CF5610) (Burkholderia cepacia (strain J2315)).